Here is a 394-residue protein sequence, read N- to C-terminus: G2/mitotic-specific cyclin-B (394 aa).

The disordered stretch occupies residues 360–394; it reads QSHPSPNSRLDQEEDMASSKFMSDQQATQELKSIR. The segment covering 379–394 has biased composition (polar residues); that stretch reads KFMSDQQATQELKSIR.

This sequence belongs to the cyclin family. Cyclin AB subfamily. In terms of assembly, interacts with the CDK1 protein kinase to form a serine/threonine kinase holoenzyme complex also known as maturation promoting factor (MPF). The cyclin subunit imparts substrate specificity to the complex.

Its function is as follows. Essential for the control of the cell cycle at the G2/M (mitosis) transition. This Patiria pectinifera (Starfish) protein is G2/mitotic-specific cyclin-B.